A 224-amino-acid polypeptide reads, in one-letter code: Transcriptional regulatory protein DltR (224 aa).

A Response regulatory domain is found at 2-116; it reads RLLVVEDEKS…ELLARIRLRT (115 aa). The residue at position 51 (Asp-51) is a 4-aspartylphosphate. The ompR/PhoB-type DNA-binding region spans 124-222; that stretch reads ANQLRLGNIR…TKGFGYSLEE (99 aa).

Phosphorylated by DltS.

The protein resides in the cytoplasm. Its function is as follows. Member of the two-component regulatory system DltS/DltR. Regulates the expression of the dlt operon. This chain is Transcriptional regulatory protein DltR (dltR), found in Streptococcus agalactiae serotype III (strain NEM316).